The following is a 350-amino-acid chain: Erythronate-4-phosphate dehydrogenase (350 aa).

Ser45 and Thr66 together coordinate substrate. NAD(+) contacts are provided by residues 124–125, Asp144, 203–205, and Asp226; these read QV and ASR. Residue Arg205 is part of the active site. The active site involves Glu231. His248 serves as the catalytic Proton donor. Gly251 provides a ligand contact to NAD(+).

The protein belongs to the D-isomer specific 2-hydroxyacid dehydrogenase family. PdxB subfamily. As to quaternary structure, homodimer.

It is found in the cytoplasm. It catalyses the reaction 4-phospho-D-erythronate + NAD(+) = (R)-3-hydroxy-2-oxo-4-phosphooxybutanoate + NADH + H(+). It functions in the pathway cofactor biosynthesis; pyridoxine 5'-phosphate biosynthesis; pyridoxine 5'-phosphate from D-erythrose 4-phosphate: step 2/5. Functionally, catalyzes the oxidation of erythronate-4-phosphate to 3-hydroxy-2-oxo-4-phosphonooxybutanoate. The protein is Erythronate-4-phosphate dehydrogenase of Legionella pneumophila subsp. pneumophila (strain Philadelphia 1 / ATCC 33152 / DSM 7513).